Consider the following 273-residue polypeptide: MAIHLYKTSTPSTRNGAVDSQVKSNPRNNLIYGQHHCGKGRNARGIITAGHRGGGHKRLYRKIDFRRNEKDISGRIVTIEYDPNRNAYICLIHYGDGEKRYILHPRGAIIGDTIVSGTEVPISMGNALPLTDMPLGTAIHNIEITLGKGGQLARAAGAVAKLIAKEGKSATLRLPSGEVRLISKNCSATVGQVGNVGVNQKSLGRAGSKCWLGKRPVVRGVVMNPVDHPHGGGEGRSPIGRKKPTTPWGYPALGRRSRKRNKYSDSLILRRRK.

Disordered stretches follow at residues 1–22 and 224–273; these read MAIH…DSQV and NPVD…RRRK.

It belongs to the universal ribosomal protein uL2 family. As to quaternary structure, part of the 50S ribosomal subunit.

The protein resides in the plastid. It localises to the chloroplast. The sequence is that of Large ribosomal subunit protein uL2cy (rpl2-B) from Chloranthus spicatus (Chulantree).